The primary structure comprises 420 residues: Gamma-glutamyl phosphate reductase (420 aa).

This sequence belongs to the gamma-glutamyl phosphate reductase family.

The protein resides in the cytoplasm. It carries out the reaction L-glutamate 5-semialdehyde + phosphate + NADP(+) = L-glutamyl 5-phosphate + NADPH + H(+). Its pathway is amino-acid biosynthesis; L-proline biosynthesis; L-glutamate 5-semialdehyde from L-glutamate: step 2/2. In terms of biological role, catalyzes the NADPH-dependent reduction of L-glutamate 5-phosphate into L-glutamate 5-semialdehyde and phosphate. The product spontaneously undergoes cyclization to form 1-pyrroline-5-carboxylate. The sequence is that of Gamma-glutamyl phosphate reductase from Shewanella denitrificans (strain OS217 / ATCC BAA-1090 / DSM 15013).